A 448-amino-acid polypeptide reads, in one-letter code: Probable intron-encoded endonuclease bI1 (448 aa).

A cob exon 1 encoded region spans residues 1–132 (MRLLKSHPLL…LMMATAFLGY (132 aa)). The next 3 helical transmembrane spans lie at 32 to 52 (FGSL…TLAM), 86 to 106 (ASAF…YGSY), and 112 to 132 (LVWA…FLGY). The interval 133-448 (QHSPKWFDIS…QWIVEDFSDK (316 aa)) is cob intron 1 encoded. The region spanning 230-321 (DLSGVYMIIN…LKLLVPNYNI (92 aa)) is the GIY-YIG domain.

To endonucleases of group I introns of fungi and phage. In terms of processing, the mature protein may arise from proteolytic cleavage of an in-frame translation of cob exon 1 plus intron 1, containing the bI1 open reading frame.

The protein localises to the mitochondrion inner membrane. Mitochondrial DNA endonuclease involved in intron homing. This Neurospora crassa (strain ATCC 24698 / 74-OR23-1A / CBS 708.71 / DSM 1257 / FGSC 987) protein is Probable intron-encoded endonuclease bI1 (bI1).